A 183-amino-acid polypeptide reads, in one-letter code: Protein jagunal homolog 1 (183 aa).

Over 1-39 (MASRAGPRAAGTDGSDFQHRERVAMHYQMSVTLKYEIKK) the chain is Cytoplasmic. S3 carries the post-translational modification Phosphoserine. A helical membrane pass occupies residues 40 to 60 (LIYVHLVIWLLLVAKMSVGHL). The Lumenal segment spans residues 61–71 (RLLSHDQVAMP). A helical membrane pass occupies residues 72 to 92 (YQWEYPYLLSILPSLLGLLSF). Over 93-96 (PRNN) the chain is Cytoplasmic. A helical membrane pass occupies residues 97-117 (ISYLVLSMISMGLFSIAPLIY). Topologically, residues 118 to 137 (GSMEMFPAAQQLYRHGKAYR) are lumenal. The chain crosses the membrane as a helical span at residues 138–158 (FLFGFSAVSIMYLVLVLAVQV). Residues 159 to 183 (HAWQLYYSKKLLDSWFTSTQEKKHK) lie on the Cytoplasmic side of the membrane.

This sequence belongs to the jagunal family. In terms of assembly, interacts with COPA, COPB2 and COPG2. As to expression, ubiquitously expressed.

It is found in the endoplasmic reticulum membrane. Functionally, endoplasmic reticulum transmembrane protein involved in vesicle-mediated transport, which is required for neutrophil function. Required for vesicle-mediated transport; it is however unclear whether it is involved in early secretory pathway or intracellular protein transport. Acts as a regulator of neutrophil function, probably via its role in vesicle-mediated transport: required for defense against fungal pathogens and for granulocyte colony-stimulating factor (GM-CSF) signaling pathway; possibly by regulating glycosylation and/or targeting of proteins contributing to the viability and migration of neutrophils. The polypeptide is Protein jagunal homolog 1 (Homo sapiens (Human)).